Here is a 507-residue protein sequence, read N- to C-terminus: Glycerol kinase (507 aa).

An ADP-binding site is contributed by threonine 13. 3 residues coordinate ATP: threonine 13, threonine 14, and serine 15. Threonine 13 provides a ligand contact to sn-glycerol 3-phosphate. Arginine 17 lines the ADP pocket. 4 residues coordinate sn-glycerol 3-phosphate: arginine 83, glutamate 84, tyrosine 135, and aspartate 245. The glycerol site is built by arginine 83, glutamate 84, tyrosine 135, aspartate 245, and glutamine 246. Positions 267 and 310 each coordinate ADP. ATP contacts are provided by threonine 267, glycine 310, glutamine 314, and glycine 411. 2 residues coordinate ADP: glycine 411 and asparagine 415.

Belongs to the FGGY kinase family.

The enzyme catalyses glycerol + ATP = sn-glycerol 3-phosphate + ADP + H(+). The protein operates within polyol metabolism; glycerol degradation via glycerol kinase pathway; sn-glycerol 3-phosphate from glycerol: step 1/1. With respect to regulation, inhibited by fructose 1,6-bisphosphate (FBP). Key enzyme in the regulation of glycerol uptake and metabolism. Catalyzes the phosphorylation of glycerol to yield sn-glycerol 3-phosphate. The sequence is that of Glycerol kinase from Halorhodospira halophila (strain DSM 244 / SL1) (Ectothiorhodospira halophila (strain DSM 244 / SL1)).